A 350-amino-acid chain; its full sequence is GTP 3',8-cyclase (350 aa).

The region spanning 27-245 (TFGRIATDLR…LRAHFTLVPD (219 aa)) is the Radical SAM core domain. Residue Arg36 participates in GTP binding. Residues Cys43 and Cys47 each coordinate [4Fe-4S] cluster. Tyr49 provides a ligand contact to S-adenosyl-L-methionine. A [4Fe-4S] cluster-binding site is contributed by Cys50. Arg87 serves as a coordination point for GTP. S-adenosyl-L-methionine is bound at residue Gly91. A GTP-binding site is contributed by Thr118. Residue Ser142 participates in S-adenosyl-L-methionine binding. Lys179 provides a ligand contact to GTP. Met213 is an S-adenosyl-L-methionine binding site. The [4Fe-4S] cluster site is built by Cys277 and Cys280. Position 282–284 (282–284 (RTR)) interacts with GTP. A [4Fe-4S] cluster-binding site is contributed by Cys294.

Belongs to the radical SAM superfamily. MoaA family. Monomer and homodimer. The cofactor is [4Fe-4S] cluster.

It carries out the reaction GTP + AH2 + S-adenosyl-L-methionine = (8S)-3',8-cyclo-7,8-dihydroguanosine 5'-triphosphate + 5'-deoxyadenosine + L-methionine + A + H(+). Its pathway is cofactor biosynthesis; molybdopterin biosynthesis. Catalyzes the cyclization of GTP to (8S)-3',8-cyclo-7,8-dihydroguanosine 5'-triphosphate. In Mycobacterium sp. (strain JLS), this protein is GTP 3',8-cyclase.